We begin with the raw amino-acid sequence, 1571 residues long: Phospholipid-transporting ATPase DNF1 (1571 aa).

Residues 1-94 (MSGTFHGDGH…TPKLNNGSGT (94 aa)) are disordered. Residues 1 to 214 (MSGTFHGDGH…TFLPKNILFQ (214 aa)) are Cytoplasmic-facing. Over residues 29-40 (EDTHIAPTHFDD) the composition is skewed to basic and acidic residues. Over residues 42 to 56 (ATSNKYSRPQVSFND) the composition is skewed to polar residues. At Ser-53 the chain carries Phosphoserine. Over residues 66-76 (AEEFTFNDDTE) the composition is skewed to acidic residues. Position 70 is a phosphothreonine (Thr-70). Residues 80-93 (HSFQPTPKLNNGSG) show a composition bias toward polar residues. A Phosphoserine modification is found at Ser-81. Thr-85 is modified (phosphothreonine). Ser-92 carries the phosphoserine modification. Phosphothreonine is present on Thr-94. Position 104 is a phosphoserine (Ser-104). Thr-109 is subject to Phosphothreonine. Residues 215-235 (FHNFANVYFLVLIILGAFQIF) form a helical membrane-spanning segment. The involved in phosphatidylcholine substrate selection stretch occupies residues 234–241 (IFGVTNPG). Topologically, residues 236-239 (GVTN) are extracellular. Residues 240–260 (PGLSAVPLVVIVIITAIKDAI) form a helical membrane-spanning segment. The Cytoplasmic portion of the chain corresponds to 261-553 (EDSRRTVLDL…RISRELNFSV (293 aa)). Phosphoserine occurs at positions 351, 354, 358, and 365. The residue at position 368 (Tyr-368) is a Phosphotyrosine. Residues 554–574 (VINFVLLFILCFVSGIANGVY) form a helical membrane-spanning segment. Topologically, residues 575–594 (YDKKGRSRFSYEFGTIAGSA) are extracellular. The segment at 586–590 (EFGTI) is involved in phosphatidylcholine substrate selection. The helical transmembrane segment at 595–615 (ATNGFVSFWVAVILYQSLVPI) threads the bilayer. Residues 616–1188 (SLYISVEIIK…WSYKRLAEMI (573 aa)) are Cytoplasmic-facing. Catalysis depends on Asp-667, which acts as the 4-aspartylphosphate intermediate. Positions 667, 668, 669, 801, 842, 844, 847, and 871 each coordinate ATP. Asp-667 is a Mg(2+) binding site. Thr-669 is a Mg(2+) binding site. Lys-895 is covalently cross-linked (Glycyl lysine isopeptide (Lys-Gly) (interchain with G-Cter in ubiquitin)). Arg-909, Thr-910, Thr-989, Gly-990, Asp-991, Arg-1104, and Lys-1110 together coordinate ATP. Asp-1130 serves as a coordination point for Mg(2+). Asn-1133 and Asp-1134 together coordinate ATP. Asp-1134 serves as a coordination point for Mg(2+). Residues 1189 to 1209 (PEFFYKNMIFALALFWYGIYN) traverse the membrane as a helical segment. Residues 1210-1219 (DFDGSYLYEY) lie on the Extracellular side of the membrane. The chain crosses the membrane as a helical span at residues 1220–1240 (TYMMFYNLAFTSLPVIFLGIL). Topologically, residues 1241–1270 (DQDVNDTISLVVPQLYRVGILRKEWNQRKF) are cytoplasmic. Residues 1271 to 1291 (LWYMLDGLYQSIICFFFPYLV) traverse the membrane as a helical segment. The Extracellular segment spans residues 1292-1307 (YHKNMIVTSNGLGLDH). A helical transmembrane segment spans residues 1308 to 1328 (RYFVGVYVTTIAVISCNTYVL). At 1329–1334 (LHQYRW) the chain is on the cytoplasmic side. A helical transmembrane segment spans residues 1335-1355 (DWFSGLFIALSCLVVFAWTGI). At 1356 to 1375 (WSSAIASREFFKAAARIYGA) the chain is on the extracellular side. A helical transmembrane segment spans residues 1376–1396 (PSFWAVFFVAVLFCLLPRFTY). Arg-1393 contributes to the a 1,2-diacyl-sn-glycero-3-phospho-L-serine binding site. Topologically, residues 1397–1571 (DSFQKFFYPT…ASLIGTQQNN (175 aa)) are cytoplasmic. Ser-1506 is modified (phosphoserine). Thr-1551 carries the post-translational modification Phosphothreonine. A phosphoserine mark is found at Ser-1552 and Ser-1563.

The protein belongs to the cation transport ATPase (P-type) (TC 3.A.3) family. Type IV subfamily. As to quaternary structure, component of a flippase complex consisting of DNF1 and LEM3. Interacts with LEM3; the interaction is direct and required for their mutual export from the endoplasmic reticulum. The cofactor is Mg(2+). Phosphorylated by FPK1 and KIN82.

The protein localises to the cell membrane. It localises to the endosome membrane. The protein resides in the golgi apparatus. It is found in the trans-Golgi network membrane. Its subcellular location is the cell septum. The protein localises to the bud. The enzyme catalyses ATP + H2O + phospholipidSide 1 = ADP + phosphate + phospholipidSide 2.. The catalysed reaction is a 1,2-diacyl-sn-glycero-3-phosphoethanolamine(out) + ATP + H2O = a 1,2-diacyl-sn-glycero-3-phosphoethanolamine(in) + ADP + phosphate + H(+). It catalyses the reaction a 1,2-diacyl-sn-glycero-3-phosphocholine(out) + ATP + H2O = a 1,2-diacyl-sn-glycero-3-phosphocholine(in) + ADP + phosphate + H(+). It carries out the reaction a beta-D-glucosyl-(1&lt;-&gt;1')-N-acylsphing-4-enine(out) + ATP + H2O = a beta-D-glucosyl-(1&lt;-&gt;1')-N-acylsphing-4-enine(in) + ADP + phosphate + H(+). The enzyme catalyses a 1,2-diacyl-sn-glycero-3-phospho-L-serine(out) + ATP + H2O = a 1,2-diacyl-sn-glycero-3-phospho-L-serine(in) + ADP + phosphate + H(+). Catalytic component of a P4-ATPase flippase complex which catalyzes the hydrolysis of ATP coupled to the transport of glucosylceramide, phosphatidylcholine, phosphatidylethanolamine, and small amounts of phosphatidylserine from the lumenal to the cytosolic leaflet of the cell membrane and ensures the maintenance of asymmetric distribution of phospholipids. Does not appear to transport sphingomyelin, inositol phosphoceramide, or phosphatidic acid. Required for efficient endocytosis. The sequence is that of Phospholipid-transporting ATPase DNF1 from Saccharomyces cerevisiae (strain ATCC 204508 / S288c) (Baker's yeast).